Consider the following 579-residue polypeptide: Putative diflavin flavoprotein A 2 (579 aa).

Residues 50 to 243 (QNGTTYNSYL…GKIKIIANGH (194 aa)) are zinc metallo-hydrolase. Fe cation contacts are provided by H99, E101, D103, H166, D185, and H243. Residues 272 to 460 (VGLFYVADYG…MLASWVSQAS (189 aa)) form the Flavodoxin-like domain. Residues 461-579 (LQPLGFTIAV…VRHRKVGNYY (119 aa)) form a flavodoxin-reductase-like region.

The protein in the N-terminal section; belongs to the zinc metallo-hydrolase group 3 family. In the C-terminal section; belongs to the flavodoxin reductase family. Requires Fe cation as cofactor.

Its function is as follows. Mediates electron transfer from NADH to oxygen, reducing it to water. This modular protein has 3 redox cofactors, in other organisms the same activity requires 2 or 3 proteins. This is Putative diflavin flavoprotein A 2 (dfa2) from Nostoc sp. (strain PCC 7120 / SAG 25.82 / UTEX 2576).